The primary structure comprises 616 residues: Chaperone protein HscA (616 aa).

It belongs to the heat shock protein 70 family.

In terms of biological role, chaperone involved in the maturation of iron-sulfur cluster-containing proteins. Has a low intrinsic ATPase activity which is markedly stimulated by HscB. Involved in the maturation of IscU. The protein is Chaperone protein HscA of Yersinia enterocolitica serotype O:8 / biotype 1B (strain NCTC 13174 / 8081).